A 368-amino-acid chain; its full sequence is Protein-glutamate methylesterase/protein-glutamine glutaminase 2 (368 aa).

In terms of domain architecture, Response regulatory spans Lys-6–Glu-123. Asp-57 bears the 4-aspartylphosphate mark. The CheB-type methylesterase domain maps to Ile-169–Leu-355. Residues Ser-181, His-207, and Asp-303 contribute to the active site.

Belongs to the CheB family. In terms of processing, phosphorylated by CheA. Phosphorylation of the N-terminal regulatory domain activates the methylesterase activity.

It localises to the cytoplasm. It carries out the reaction [protein]-L-glutamate 5-O-methyl ester + H2O = L-glutamyl-[protein] + methanol + H(+). The enzyme catalyses L-glutaminyl-[protein] + H2O = L-glutamyl-[protein] + NH4(+). Involved in chemotaxis. Part of a chemotaxis signal transduction system that modulates chemotaxis in response to various stimuli. Catalyzes the demethylation of specific methylglutamate residues introduced into the chemoreceptors (methyl-accepting chemotaxis proteins or MCP) by CheR. Also mediates the irreversible deamidation of specific glutamine residues to glutamic acid. This is Protein-glutamate methylesterase/protein-glutamine glutaminase 2 from Hahella chejuensis (strain KCTC 2396).